A 79-amino-acid chain; its full sequence is NADH-ubiquinone oxidoreductase chain 5 (79 aa).

A run of 2 helical transmembrane segments spans residues 5-27 (TPIM…TNPY) and 40-57 (VMYA…FILS).

Belongs to the complex I subunit 5 family. Core subunit of respiratory chain NADH dehydrogenase (Complex I) which is composed of 45 different subunits.

The protein localises to the mitochondrion inner membrane. It catalyses the reaction a ubiquinone + NADH + 5 H(+)(in) = a ubiquinol + NAD(+) + 4 H(+)(out). Functionally, core subunit of the mitochondrial membrane respiratory chain NADH dehydrogenase (Complex I) which catalyzes electron transfer from NADH through the respiratory chain, using ubiquinone as an electron acceptor. Essential for the catalytic activity and assembly of complex I. In Macaca fascicularis (Crab-eating macaque), this protein is NADH-ubiquinone oxidoreductase chain 5 (MT-ND5).